Reading from the N-terminus, the 562-residue chain is Flagella accessory protein J (562 aa).

The next 9 membrane-spanning stretches (helical) occupy residues 32-52 (IVLI…IYLL), 53-73 (LPII…DSQK), 199-219 (VSAM…PFLL), 225-245 (FMAT…VVVI), 273-293 (IISV…KYIV), 302-322 (PYMI…FVAL), 446-466 (FVGV…ASLG), 498-518 (VVEY…AILI), and 527-547 (FVSL…AYIT).

It to M.voltae FlaJ. The protein to M.jannaschii MJ1286.

The protein resides in the cell membrane. It is found in the archaeal flagellum. The sequence is that of Flagella accessory protein J (flaJ) from Methanocaldococcus jannaschii (strain ATCC 43067 / DSM 2661 / JAL-1 / JCM 10045 / NBRC 100440) (Methanococcus jannaschii).